The chain runs to 123 residues: Cysteine proteinase inhibitor 8 (123 aa).

Positions 1-19 (MARIPLLLALLLAVSAAAA) are cleaved as a signal peptide. The Cystatin domain occupies 33 to 91 (GGWSPITDVGDPHIQELGGWAVERHASLSSDGLRFRRVTSGEQQVVSGMNYRLVVSASD). The Secondary area of contact motif lies at 76–80 (QVVSG).

Belongs to the cystatin family. Phytocystatin subfamily.

It is found in the secreted. Specific inhibitor of cysteine proteinases. Probably involved in the regulation of endogenous processes and in defense against pests and pathogens. The chain is Cysteine proteinase inhibitor 8 from Oryza sativa subsp. japonica (Rice).